We begin with the raw amino-acid sequence, 168 residues long: ATP synthase subunit b, chloroplastic (168 aa).

The helical transmembrane segment at 20–37 (LNLAVVLPIVFTLGRDTL) threads the bilayer.

It belongs to the ATPase B chain family. As to quaternary structure, F-type ATPases have 2 components, F(1) - the catalytic core - and F(0) - the membrane proton channel. F(1) has five subunits: alpha(3), beta(3), gamma(1), delta(1), epsilon(1). F(0) has four main subunits: a(1), b(1), b'(1) and c(10-14). The alpha and beta chains form an alternating ring which encloses part of the gamma chain. F(1) is attached to F(0) by a central stalk formed by the gamma and epsilon chains, while a peripheral stalk is formed by the delta, b and b' chains.

The protein resides in the plastid. Its subcellular location is the chloroplast thylakoid membrane. Its function is as follows. F(1)F(0) ATP synthase produces ATP from ADP in the presence of a proton or sodium gradient. F-type ATPases consist of two structural domains, F(1) containing the extramembraneous catalytic core and F(0) containing the membrane proton channel, linked together by a central stalk and a peripheral stalk. During catalysis, ATP synthesis in the catalytic domain of F(1) is coupled via a rotary mechanism of the central stalk subunits to proton translocation. Functionally, component of the F(0) channel, it forms part of the peripheral stalk, linking F(1) to F(0). The protein is ATP synthase subunit b, chloroplastic of Ostreococcus tauri.